The chain runs to 391 residues: Stearoyl-[acyl-carrier-protein] 9-desaturase 5, chloroplastic (391 aa).

The segment at 1–20 is disordered; sequence MAFAPSHTASPSYCGVAQGG. Residues 1–32 constitute a chloroplast transit peptide; that stretch reads MAFAPSHTASPSYCGVAQGGRRSNGMSPVVAM. Positions 133, 171, 174, 224, 257, and 260 each coordinate Fe cation.

Belongs to the fatty acid desaturase type 2 family. In terms of assembly, homodimer. Requires Fe(2+) as cofactor.

Its subcellular location is the plastid. It localises to the chloroplast. It catalyses the reaction octadecanoyl-[ACP] + 2 reduced [2Fe-2S]-[ferredoxin] + O2 + 2 H(+) = (9Z)-octadecenoyl-[ACP] + 2 oxidized [2Fe-2S]-[ferredoxin] + 2 H2O. It participates in lipid metabolism; fatty acid metabolism. Functionally, converts stearoyl-ACP to oleoyl-ACP by introduction of a cis double bond between carbons 9 and 10 of the acyl chain. This chain is Stearoyl-[acyl-carrier-protein] 9-desaturase 5, chloroplastic, found in Oryza sativa subsp. indica (Rice).